A 274-amino-acid polypeptide reads, in one-letter code: Large ribosomal subunit protein uL2 (274 aa).

Disordered stretches follow at residues 28-54 and 221-274; these read KPYA…TRHI and RGTA…RTKK. Polar residues predominate over residues 39–49; it reads KTGGRNNNGRI.

It belongs to the universal ribosomal protein uL2 family. Part of the 50S ribosomal subunit. Forms a bridge to the 30S subunit in the 70S ribosome.

Functionally, one of the primary rRNA binding proteins. Required for association of the 30S and 50S subunits to form the 70S ribosome, for tRNA binding and peptide bond formation. It has been suggested to have peptidyltransferase activity; this is somewhat controversial. Makes several contacts with the 16S rRNA in the 70S ribosome. In Photorhabdus laumondii subsp. laumondii (strain DSM 15139 / CIP 105565 / TT01) (Photorhabdus luminescens subsp. laumondii), this protein is Large ribosomal subunit protein uL2.